The primary structure comprises 394 residues: Elongation factor Tu 2 (394 aa).

The 195-residue stretch at 10-204 (KPHVNVGTIG…HLDTYIPEPE (195 aa)) folds into the tr-type G domain. The G1 stretch occupies residues 19–26 (GHVDHGKT). Residue 19–26 (GHVDHGKT) participates in GTP binding. Threonine 26 lines the Mg(2+) pocket. Positions 60-64 (GITIN) are G2. Positions 81-84 (DCPG) are G3. Residues 81-85 (DCPGH) and 136-139 (NKCD) each bind GTP. Residues 136-139 (NKCD) are G4. A G5 region spans residues 174–176 (SAL).

This sequence belongs to the TRAFAC class translation factor GTPase superfamily. Classic translation factor GTPase family. EF-Tu/EF-1A subfamily. Monomer.

It is found in the cytoplasm. The enzyme catalyses GTP + H2O = GDP + phosphate + H(+). In terms of biological role, GTP hydrolase that promotes the GTP-dependent binding of aminoacyl-tRNA to the A-site of ribosomes during protein biosynthesis. This Haemophilus influenzae (strain 86-028NP) protein is Elongation factor Tu 2.